Reading from the N-terminus, the 174-residue chain is FMN-dependent NADPH-azoreductase (174 aa).

FMN contacts are provided by residues 9-11 (TPR), 15-16 (RT), 73-76 (EYHS), and glycine 106.

The protein belongs to the azoreductase type 2 family. Homotetramer. FMN is required as a cofactor.

Functionally, catalyzes the reductive cleavage of azo bond in aromatic azo compounds to the corresponding amines. Requires NADPH, but not NADH, as an electron donor for its activity. This chain is FMN-dependent NADPH-azoreductase (azr), found in Bacillus subtilis (strain 168).